A 337-amino-acid chain; its full sequence is Mitochondrial glutathione transporter SLC25A40 (337 aa).

Solcar repeat units lie at residues 14–132 (VTPL…LSTF), 140–224 (NETR…LRRW), and 234–328 (STFM…GKGF). 6 consecutive transmembrane segments (helical) span residues 20–40 (MMAS…LDVV), 104–124 (LWSG…IYFT), 146–166 (IVAG…LELI), 200–221 (WAPT…YENL), 240–260 (FTAG…FDVV), and 299–319 (GLFT…AIMI).

This sequence belongs to the mitochondrial carrier (TC 2.A.29) family. As to expression, widely expressed at low level.

It localises to the mitochondrion inner membrane. The catalysed reaction is glutathione(in) = glutathione(out). Probable mitochondrial transporter required for glutathione import into mitochondria. Glutathione, which plays key roles in oxidative metabolism, is produced exclusively in the cytosol and is imported in many organelles. Mitochondrial glutathione is required for the activity and stability of proteins containing iron-sulfur clusters, as well as erythropoiesis. The sequence is that of Mitochondrial glutathione transporter SLC25A40 from Rattus norvegicus (Rat).